The sequence spans 262 residues: Acyl-coenzyme A diphosphatase FITM2 (262 aa).

Residues 1–23 (MEHLERCAWFLRGTLVRATVRRH) lie on the Cytoplasmic side of the membrane. Residues 24-44 (LPWALVAAMLAGSVVKELSPL) form a helical membrane-spanning segment. The Lumenal segment spans residues 45–57 (PESYLSNKRNVLN). Residues 58–78 (VYFVKLAWAWTVCLLLPFIAL) form a helical membrane-spanning segment. Over 79 to 93 (TNYHLTGKTSLVLRR) the chain is Cytoplasmic. Residues 94 to 114 (LSTLLVGTAIWYICTALFSNI) traverse the membrane as a helical segment. Over 115–145 (EHYTGSCYQSPALEGIRQEHRSKQQCHREGG) the chain is Lumenal. A helical membrane pass occupies residues 146 to 166 (FWHGFDISGHSFLLTFCALMI). His155 is a catalytic residue. The Cytoplasmic portion of the chain corresponds to 167–190 (VEEMAVLHEVKTDRGHHLHAAITT). Residues 191 to 211 (LVVALGFLTFIWVWMFLCTAV) form a helical membrane-spanning segment. Residues 212–218 (YFHDLTQ) are Lumenal-facing. The active site involves His214. The helical transmembrane segment at 219 to 239 (KVFGTMFGLLGWYGTYGYWYL) threads the bilayer. Residues 240 to 262 (KSFSPGLPPQSCSLTLKRDTYKK) are Cytoplasmic-facing.

This sequence belongs to the FIT family. As to expression, widely expressed, with highest levels in white and brown adipose tissues (at protein level). In the heart, mRNA expression levels do not correlate well with protein levels, suggesting post-transcriptional regulation in this organ.

Its subcellular location is the endoplasmic reticulum membrane. It catalyses the reaction an acyl-CoA + H2O = an acyl-4'-phosphopantetheine + adenosine 3',5'-bisphosphate + 2 H(+). It carries out the reaction (9Z)-octadecenoyl-CoA + H2O = S-(9Z-octadecenoyl)-4'-phosphopantetheine + adenosine 3',5'-bisphosphate + 2 H(+). The enzyme catalyses (5Z,8Z,11Z,14Z)-eicosatetraenoyl-CoA + H2O = S-(5Z,8Z,11Z,14Z-eicosatetraenoyl)-4'-phosphopantetheine + adenosine 3',5'-bisphosphate + 2 H(+). The catalysed reaction is hexadecanoyl-CoA + H2O = S-hexadecanoyl-4'-phosphopantetheine + adenosine 3',5'-bisphosphate + 2 H(+). Fatty acyl-coenzyme A (CoA) diphosphatase that hydrolyzes fatty acyl-CoA to yield acyl-4'-phosphopantetheine and adenosine 3',5'-bisphosphate. Preferentially hydrolyzes unsaturated long-chain acyl-CoA substrates such as oleoyl-CoA/(9Z)-octadecenoyl-CoA and arachidonoyl-CoA/(5Z,8Z,11Z,14Z)-eicosatetraenoyl-CoA in the endoplasmic reticulum (ER) lumen. This catalytic activity is required for maintaining ER structure and for lipid droplets (LDs) biogenesis, which are lipid storage organelles involved in maintaining lipid and energy homeostasis. Directly binds to diacylglycerol (DAGs) and triacylglycerol, which is also important for LD biogenesis. May support directional budding of nacent LDs from the ER into the cytosol by reducing DAG levels at sites of LD formation. Plays a role in the regulation of cell morphology and cytoskeletal organization. The polypeptide is Acyl-coenzyme A diphosphatase FITM2 (Mus musculus (Mouse)).